The sequence spans 185 residues: Disulfide bond formation protein B (185 aa).

Topologically, residues 1–25 (MLLFFVILGIFVLTILKAISKQRWS) are cytoplasmic. A helical membrane pass occupies residues 26-42 (WLLLAASALSLELSALY). The Periplasmic segment spans residues 43 to 60 (FQHVMQLEPCVMCVYERL). The cysteines at positions 52 and 55 are disulfide-linked. A helical transmembrane segment spans residues 61–76 (AMLGILLAGLIGASSP). The Cytoplasmic portion of the chain corresponds to 77-83 (NNVFIRL). A helical transmembrane segment spans residues 84 to 101 (SAFLLWGISAVWGILLAI). The Periplasmic portion of the chain corresponds to 102–156 (KHTDYQLHPSPFFTCDFFPNFPAWAPLHEWLPWLFNPTGDCSDIVWQFLGYSMPQ). A disulfide bond links Cys-116 and Cys-142. Residues 157–175 (WLIVSFSLYTLLFIIFAIS) form a helical membrane-spanning segment. At 176 to 185 (AVLKTKKQLF) the chain is on the cytoplasmic side.

It belongs to the DsbB family.

It is found in the cell inner membrane. Its function is as follows. Required for disulfide bond formation in some periplasmic proteins. Acts by oxidizing the DsbA protein. In Psychromonas ingrahamii (strain DSM 17664 / CCUG 51855 / 37), this protein is Disulfide bond formation protein B.